We begin with the raw amino-acid sequence, 621 residues long: Nitrate reductase [NADH] 1 (621 aa).

The 76-residue stretch at 249 to 324 (GKEFTMSEVR…LDTYRIGELI (76 aa)) folds into the Cytochrome b5 heme-binding domain. The heme site is built by histidine 284 and histidine 307. The FAD-binding FR-type domain maps to 361–473 (REKIHCRLVG…KGPLGHVEYT (113 aa)). Residues 413 to 416 (RAYT), 430 to 432 (LVK), phenylalanine 435, 447 to 449 (LMT), serine 497, and threonine 500 contribute to the FAD site.

The protein belongs to the nitrate reductase family. In terms of assembly, homodimer. FAD is required as a cofactor. It depends on heme as a cofactor. The cofactor is Mo-molybdopterin.

It catalyses the reaction nitrite + NAD(+) + H2O = nitrate + NADH + H(+). Functionally, nitrate reductase is a key enzyme involved in the first step of nitrate assimilation in plants, fungi and bacteria. This chain is Nitrate reductase [NADH] 1, found in Zea mays (Maize).